Reading from the N-terminus, the 208-residue chain is Small ribosomal subunit protein uS4 (208 aa).

One can recognise an S4 RNA-binding domain in the interval 99-165 (RRLDNVVFQL…PRLKEILSSL (67 aa)).

It belongs to the universal ribosomal protein uS4 family. As to quaternary structure, part of the 30S ribosomal subunit. Contacts protein S5. The interaction surface between S4 and S5 is involved in control of translational fidelity.

One of the primary rRNA binding proteins, it binds directly to 16S rRNA where it nucleates assembly of the body of the 30S subunit. Its function is as follows. With S5 and S12 plays an important role in translational accuracy. This Desulfitobacterium hafniense (strain DSM 10664 / DCB-2) protein is Small ribosomal subunit protein uS4.